Reading from the N-terminus, the 200-residue chain is Recombination protein RecR (200 aa).

A C4-type zinc finger spans residues 57 to 72 (CRLCRTLTEEELCPQC). Positions 80-175 (TLLCVVEGPT…VASRIAHGVP (96 aa)) constitute a Toprim domain.

Belongs to the RecR family.

Its function is as follows. May play a role in DNA repair. It seems to be involved in an RecBC-independent recombinational process of DNA repair. It may act with RecF and RecO. The sequence is that of Recombination protein RecR from Pseudomonas syringae pv. tomato (strain ATCC BAA-871 / DC3000).